Here is a 53-residue protein sequence, read N- to C-terminus: Sec-independent protein translocase protein TatA (53 aa).

Residues 1–21 traverse the membrane as a helical segment; sequence MGMSFSHLLIVLLIIFVLFGA.

It belongs to the TatA/E family. The Tat system comprises two distinct complexes: a TatABC complex, containing multiple copies of TatA, TatB and TatC subunits, and a separate TatA complex, containing only TatA subunits. Substrates initially bind to the TatABC complex, which probably triggers association of the separate TatA complex to form the active translocon.

It is found in the cell inner membrane. Its function is as follows. Part of the twin-arginine translocation (Tat) system that transports large folded proteins containing a characteristic twin-arginine motif in their signal peptide across membranes. TatA could form the protein-conducting channel of the Tat system. The protein is Sec-independent protein translocase protein TatA of Rickettsia africae (strain ESF-5).